Here is a 215-residue protein sequence, read N- to C-terminus: Vesicle-trafficking protein SEC22b-A (215 aa).

At 1–190 (MVLQTMIVRV…RSDAKYLNTR (190 aa)) the chain is on the cytoplasmic side. Residues 6–119 (MIVRVADSLP…YSFIEFDTYI (114 aa)) form the Longin domain. The v-SNARE coiled-coil homology domain maps to 134–194 (NLGNINSELH…KYLNTRSTYA (61 aa)). Residues 191-213 (STYAKVAAGAVIIITLIIYVRFW) traverse the membrane as a helical segment. The Lumenal segment spans residues 214 to 215 (WL).

It belongs to the synaptobrevin family. In terms of assembly, component of 2 distinct SNARE complexes.

It is found in the endoplasmic reticulum membrane. It localises to the endoplasmic reticulum-Golgi intermediate compartment membrane. Its subcellular location is the golgi apparatus. The protein localises to the cis-Golgi network membrane. The protein resides in the trans-Golgi network membrane. It is found in the melanosome. In terms of biological role, SNARE involved in targeting and fusion of ER-derived transport vesicles with the Golgi complex as well as Golgi-derived retrograde transport vesicles with the ER. The sequence is that of Vesicle-trafficking protein SEC22b-A from Danio rerio (Zebrafish).